Consider the following 341-residue polypeptide: MDYKNSGVDIEAGYKSVELMKKHVKETMRPEVLGGLGGFSGAFSLASIKDMEDPVLLSGTDGCGTKVKLAFIMDKHDTIGIDAVAMCVNDVACAGGEPLFFLDYIACGKNYPEKIATIVSGVAEGCKQSGCALVGGETAEHPGLMPEDEYDLAGFAVGVVDRKDIITGEGLKDGDVLIGMASTGVHSNGFSLVRKIFKMDKETLNTYHEELGTTLGEALLAPTRIYVKALKAVKDAGVTVKACSHITGGGFYENIPRMLIDGKRAVVEKNSYPVPPIFKMMAREGNVEEQMMYNTYNMGLGMIVAVDPADVDKTMEAMKSAGDTPYVVGKIIDGEKGVDLV.

It belongs to the AIR synthase family.

Its subcellular location is the cytoplasm. The catalysed reaction is 2-formamido-N(1)-(5-O-phospho-beta-D-ribosyl)acetamidine + ATP = 5-amino-1-(5-phospho-beta-D-ribosyl)imidazole + ADP + phosphate + H(+). The protein operates within purine metabolism; IMP biosynthesis via de novo pathway; 5-amino-1-(5-phospho-D-ribosyl)imidazole from N(2)-formyl-N(1)-(5-phospho-D-ribosyl)glycinamide: step 2/2. In Agathobacter rectalis (strain ATCC 33656 / DSM 3377 / JCM 17463 / KCTC 5835 / VPI 0990) (Eubacterium rectale), this protein is Phosphoribosylformylglycinamidine cyclo-ligase.